The primary structure comprises 29 residues: Cytochrome c oxidase subunit 7A1, mitochondrial (29 aa).

A compositionally biased stretch (basic and acidic residues) spans 1–13; the sequence is LENRVAEKQKLFQ. A disordered region spans residues 1-29; the sequence is LENRVAEKQKLFQEDNGLPVHLKGGATDN.

Belongs to the cytochrome c oxidase VIIa family. As to quaternary structure, component of the complex IV (CIV, cytochrome c oxidase), a multisubunit enzyme composed of 14 subunits. The complex is composed of a catalytic core of 3 subunits MT-CO1, MT-CO2 and MT-CO3, encoded in the mitochondrial DNA, and 11 supernumerary subunits COX4I1 (or COX4I2), COX5A, COX5B, COX6A2 (or COX6A1), COX6B1 (or COX6B2), COX6C, COX7A1 (or COX7A2), COX7B, COX7C, COX8B and NDUFA4, which are encoded in the nuclear genome. The complex exists as a monomer or a dimer and forms supercomplexes (SCs) in the inner mitochondrial membrane with NADH-ubiquinone oxidoreductase (complex I, CI) and ubiquinol-cytochrome c oxidoreductase (cytochrome b-c1 complex, complex III, CIII), resulting in different assemblies (supercomplex SCI(1)III(2)IV(1) and megacomplex MCI(2)III(2)IV(2)).

The protein localises to the mitochondrion inner membrane. It participates in energy metabolism; oxidative phosphorylation. Component of the mitochondrial respiratory complex IV (CIV, also named cytochrome c oxidase complex), the last enzyme in the mitochondrial electron transport chain which drives oxidative phosphorylation. The CIV complex is the component of the respiratory chain that catalyzes the reduction of oxygen to water. Acts as an assembly factor that specifically drives the homodimerization of CIV complexes, mediating the formation of mitochondrial respiratory supercomplexes (respirasomes) containing two CIV: supercomplxes with two molecules of CIV show improved activity. Despite being highly expressed in brown adipose tissue, not required for thermogenesis. The chain is Cytochrome c oxidase subunit 7A1, mitochondrial (COX7A1) from Ovis aries (Sheep).